Reading from the N-terminus, the 127-residue chain is Anti-adapter protein IraD (127 aa).

Belongs to the GpW/Gp25 family. IraD subfamily. Interacts with RssB.

It localises to the cytoplasm. In terms of biological role, inhibits RpoS proteolysis by regulating RssB activity, thereby increasing the stability of the sigma stress factor RpoS during oxidative stress. Its effect on RpoS stability is due to its interaction with RssB, which probably blocks the interaction of RssB with RpoS, and the consequent delivery of the RssB-RpoS complex to the ClpXP protein degradation pathway. The sequence is that of Anti-adapter protein IraD from Escherichia coli (strain UTI89 / UPEC).